Consider the following 480-residue polypeptide: uncharacterized protein (480 aa).

Lysine 222 is modified (N6-(pyridoxal phosphate)lysine).

This sequence belongs to the Orn/Lys/Arg decarboxylase class-I family. Pyridoxal 5'-phosphate serves as cofactor.

This is an uncharacterized protein from Bacillus subtilis (strain 168).